The following is a 205-amino-acid chain: Cytochrome c oxidase subunit 3 (205 aa).

A run of 5 helical transmembrane segments spans residues 28–48 (GTIVFLSQELMFFAGLFAMYF), 72–92 (ALVITIILISSSVTAQFGVFA), 104–124 (WFSLTILLGAIFLVGQAYEYF), 142–162 (FFITTGFHAAHVLAGALAFVV), and 184–204 (SYYWHFVDVVWIGLFITIYFI).

Belongs to the cytochrome c oxidase subunit 3 family. Associates with subunits I, II and IV to form cytochrome c oxidase.

It localises to the cell membrane. It carries out the reaction 4 Fe(II)-[cytochrome c] + O2 + 8 H(+)(in) = 4 Fe(III)-[cytochrome c] + 2 H2O + 4 H(+)(out). The chain is Cytochrome c oxidase subunit 3 (ctaE) from Corynebacterium diphtheriae (strain ATCC 700971 / NCTC 13129 / Biotype gravis).